Here is a 119-residue protein sequence, read N- to C-terminus: MARVKGGVVSRKRRKRVLKLAKGYYGAKHILFRTAKEQVMNSYYYAYRDRRQRKRDFRKLWITRINAAARMNGLSYSQLMHGLKLAEVEVNRKMLADLAVNDAAAFTVLADAAKEKLGK.

The protein belongs to the bacterial ribosomal protein bL20 family.

Functionally, binds directly to 23S ribosomal RNA and is necessary for the in vitro assembly process of the 50S ribosomal subunit. It is not involved in the protein synthesizing functions of that subunit. The protein is Large ribosomal subunit protein bL20 of Streptococcus mutans serotype c (strain ATCC 700610 / UA159).